The chain runs to 257 residues: UPF0246 protein Rsph17029_0026 (257 aa).

This sequence belongs to the UPF0246 family.

This chain is UPF0246 protein Rsph17029_0026, found in Cereibacter sphaeroides (strain ATCC 17029 / ATH 2.4.9) (Rhodobacter sphaeroides).